Here is a 36-residue protein sequence, read N- to C-terminus: Photosystem II reaction center protein Y (36 aa).

Over 1–4 the chain is Lumenal; the sequence is MDTR. A helical membrane pass occupies residues 5–23; sequence LIVIAAPVLVAASWALFNI. Topologically, residues 24–36 are stromal; it reads GRLAIQQIQRLKR.

Belongs to the PsbY family. In terms of assembly, PSII is composed of 1 copy each of membrane proteins PsbA, PsbB, PsbC, PsbD, PsbE, PsbF, PsbH, PsbI, PsbJ, PsbK, PsbL, PsbM, PsbT, PsbX, PsbY, PsbZ, Psb30/Ycf12, at least 3 peripheral proteins of the oxygen-evolving complex and a large number of cofactors. It forms dimeric complexes.

Its subcellular location is the plastid. It localises to the chloroplast thylakoid membrane. In terms of biological role, loosely associated component of the core of photosystem II (PSII), it is not always seen in crystals. PSII is a light-driven water plastoquinone oxidoreductase, using light energy to abstract electrons from H(2)O, generating a proton gradient subsequently used for ATP formation. The protein is Photosystem II reaction center protein Y of Phaeodactylum tricornutum (strain CCAP 1055/1).